The following is an 88-amino-acid chain: Fe-S protein maturation auxiliary factor SufT (88 aa).

The protein belongs to the MIP18 family.

Involved in the maturation of iron-sulfur (Fe-S) proteins. May function as a Fe-S cluster carrier. Is required for S.aureus growth under conditions that impose a high demand for lipoic acid, likely via a role in the maturation of the lipoate synthase LipA. Is non-essential for growth in conditions that impose a low demand for lipoic acid or Fe-S clusters, such as fermentative growth. Also seems to be involved in the maturation of AcnA, LeuCD and IlvD proteins, that utilize Fe-S cluster cofactors, and its role increases under conditions of high-demand for Fe-S clusters (respiratory growth). Is not involved in the repair of Fe-S clusters damaged by reactive oxygen species or in the physical protection of Fe-S clusters from oxidants. Displays synergy with the Fe-S cluster carrier Nfu. In Staphylococcus aureus (strain USA300), this protein is Fe-S protein maturation auxiliary factor SufT.